Reading from the N-terminus, the 269-residue chain is tRNA (guanine-N(7)-)-methyltransferase (269 aa).

The tract at residues 1-38 (MDGVNDAANHTVESVPGRPSTASAPLEAGRRSPTGSRL) is disordered. S-adenosyl-L-methionine-binding residues include glutamate 91, glutamate 116, aspartate 143, and aspartate 166. Aspartate 166 is a catalytic residue. Residues lysine 170, aspartate 202, and 247 to 250 (TKFE) each bind substrate.

It belongs to the class I-like SAM-binding methyltransferase superfamily. TrmB family.

The catalysed reaction is guanosine(46) in tRNA + S-adenosyl-L-methionine = N(7)-methylguanosine(46) in tRNA + S-adenosyl-L-homocysteine. It functions in the pathway tRNA modification; N(7)-methylguanine-tRNA biosynthesis. Functionally, catalyzes the formation of N(7)-methylguanine at position 46 (m7G46) in tRNA. This is tRNA (guanine-N(7)-)-methyltransferase from Nocardia farcinica (strain IFM 10152).